We begin with the raw amino-acid sequence, 4513 residues long: Dynein-1-beta heavy chain, flagellar inner arm I1 complex (4513 aa).

A stem region spans residues 1–1806; sequence MEPGDEGKGH…IVKQVLSVFY (1806 aa). 3 coiled-coil regions span residues 192–223, 1544–1577, and 1704–1727; these read KAAA…NQQD, TAQG…RQQF, and THEC…LKKK. 4 AAA regions span residues 1807-2028, 2089-2350, 2458-2706, and 2808-3059; these read YGYE…PIAR, RAIE…VPEN, FKPA…IIQG, and DYAL…LKRR. ATP is bound by residues 1845–1852, 2127–2134, 2497–2504, and 2848–2855; these read GPAGTGKT, GRTGSGKS, GNVGVGKT, and GVGGSGRK. Coiled-coil stretches lie at residues 3107-3193, 3301-3384, and 3499-3519; these read AAMK…LTKK, KRAK…SISE, and RLKV…NAIQ. A stalk region spans residues 3107–3384; that stretch reads AAMKKVAEEK…RVRWEASISE (278 aa). AAA regions lie at residues 3443 to 3674 and 3890 to 4109; these read LANP…EVNA and ATTY…LLKS.

As to quaternary structure, the I1 inner arm complex (also known as the f dynein complex) is a two-headed isoform composed of two heavy chains (1-alpha and 1-beta), three intermediate chains and three light chains. I1 occupies a specific position proximal to the first radial spoke and repeats every 96 nm along the length of the axoneme.

It localises to the cell projection. The protein localises to the cilium. The protein resides in the flagellum. Its subcellular location is the cytoplasm. It is found in the cytoskeleton. It localises to the flagellum axoneme. Functionally, force generating protein of eukaryotic cilia and flagella. Produces force towards the minus ends of microtubules. Dynein has ATPase activity; the force-producing power stroke is thought to occur on release of ADP. Required for assembly of the I1 inner arm complex and its targeting to the appropriate axoneme location. Also required for phototaxis. The sequence is that of Dynein-1-beta heavy chain, flagellar inner arm I1 complex (DHC10) from Chlamydomonas reinhardtii (Chlamydomonas smithii).